The chain runs to 335 residues: Anthranilate phosphoribosyltransferase (335 aa).

5-phospho-alpha-D-ribose 1-diphosphate is bound by residues Gly-80, 83–84, Thr-88, 90–93, 108–116, and Ser-120; these read GD, NIST, and KHGNRAVSS. Anthranilate is bound at residue Gly-80. Mg(2+) is bound at residue Ser-92. Asn-111 contributes to the anthranilate binding site. Residue Arg-166 participates in anthranilate binding. Residues Asp-225 and Glu-226 each coordinate Mg(2+).

Belongs to the anthranilate phosphoribosyltransferase family. In terms of assembly, homodimer. Mg(2+) is required as a cofactor.

The catalysed reaction is N-(5-phospho-beta-D-ribosyl)anthranilate + diphosphate = 5-phospho-alpha-D-ribose 1-diphosphate + anthranilate. It participates in amino-acid biosynthesis; L-tryptophan biosynthesis; L-tryptophan from chorismate: step 2/5. In terms of biological role, catalyzes the transfer of the phosphoribosyl group of 5-phosphorylribose-1-pyrophosphate (PRPP) to anthranilate to yield N-(5'-phosphoribosyl)-anthranilate (PRA). The sequence is that of Anthranilate phosphoribosyltransferase from Clostridium kluyveri (strain NBRC 12016).